The sequence spans 270 residues: tRNA pseudouridine synthase A (270 aa).

Catalysis depends on Asp-60, which acts as the Nucleophile. Positions 107–111 are RNA binding; sequence FHARF. Tyr-118 serves as a coordination point for substrate. The tract at residues 168–172 is interaction with tRNA; the sequence is QCQSR.

This sequence belongs to the tRNA pseudouridine synthase TruA family. In terms of assembly, homodimer.

It carries out the reaction uridine(38/39/40) in tRNA = pseudouridine(38/39/40) in tRNA. Functionally, formation of pseudouridine at positions 38, 39 and 40 in the anticodon stem and loop of transfer RNAs. The protein is tRNA pseudouridine synthase A of Shigella boydii serotype 18 (strain CDC 3083-94 / BS512).